The following is a 99-amino-acid chain: NADH-quinone oxidoreductase subunit K (99 aa).

Transmembrane regions (helical) follow at residues 3-23 (PANY…GVLV), 28-48 (IVVF…LVTF), and 59-79 (VMAF…LAII).

Belongs to the complex I subunit 4L family. As to quaternary structure, NDH-1 is composed of 14 different subunits. Subunits NuoA, H, J, K, L, M, N constitute the membrane sector of the complex.

It is found in the cell membrane. The catalysed reaction is a quinone + NADH + 5 H(+)(in) = a quinol + NAD(+) + 4 H(+)(out). In terms of biological role, NDH-1 shuttles electrons from NADH, via FMN and iron-sulfur (Fe-S) centers, to quinones in the respiratory chain. The immediate electron acceptor for the enzyme in this species is believed to be a menaquinone. Couples the redox reaction to proton translocation (for every two electrons transferred, four hydrogen ions are translocated across the cytoplasmic membrane), and thus conserves the redox energy in a proton gradient. The sequence is that of NADH-quinone oxidoreductase subunit K from Frankia alni (strain DSM 45986 / CECT 9034 / ACN14a).